We begin with the raw amino-acid sequence, 534 residues long: CTP synthase (534 aa).

Residues 1–267 form an amidoligase domain region; that stretch reads MTKYIFVTGG…DQIVCDHLKL (267 aa). S13 provides a ligand contact to CTP. S13 serves as a coordination point for UTP. 14–19 lines the ATP pocket; the sequence is SIGKGI. Y54 is an L-glutamine binding site. An ATP-binding site is contributed by D71. Mg(2+) is bound by residues D71 and E141. CTP-binding positions include 148–150, 188–193, and K224; these read DIE and KTKPTQ. Residues 188–193 and K224 contribute to the UTP site; that span reads KTKPTQ. Residue 240 to 242 coordinates ATP; the sequence is RDV. The region spanning 292–534 is the Glutamine amidotransferase type-1 domain; sequence KIALVGKYVE…FVTAAIKNSN (243 aa). G354 contributes to the L-glutamine binding site. Catalysis depends on C381, which acts as the Nucleophile; for glutamine hydrolysis. L-glutamine-binding positions include 382-385, E405, and R463; that span reads LGMQ. Residues H508 and E510 contribute to the active site.

Belongs to the CTP synthase family. Homotetramer.

The catalysed reaction is UTP + L-glutamine + ATP + H2O = CTP + L-glutamate + ADP + phosphate + 2 H(+). The enzyme catalyses L-glutamine + H2O = L-glutamate + NH4(+). It carries out the reaction UTP + NH4(+) + ATP = CTP + ADP + phosphate + 2 H(+). It functions in the pathway pyrimidine metabolism; CTP biosynthesis via de novo pathway; CTP from UDP: step 2/2. With respect to regulation, allosterically activated by GTP, when glutamine is the substrate; GTP has no effect on the reaction when ammonia is the substrate. The allosteric effector GTP functions by stabilizing the protein conformation that binds the tetrahedral intermediate(s) formed during glutamine hydrolysis. Inhibited by the product CTP, via allosteric rather than competitive inhibition. In terms of biological role, catalyzes the ATP-dependent amination of UTP to CTP with either L-glutamine or ammonia as the source of nitrogen. Regulates intracellular CTP levels through interactions with the four ribonucleotide triphosphates. The chain is CTP synthase from Streptococcus pyogenes serotype M4 (strain MGAS10750).